A 137-amino-acid chain; its full sequence is Phosphoribosyl-AMP cyclohydrolase (137 aa).

Asp-84 is a Mg(2+) binding site. Cys-85 is a Zn(2+) binding site. Residues Asp-86 and Asp-88 each contribute to the Mg(2+) site. Cys-101 and Cys-108 together coordinate Zn(2+).

It belongs to the PRA-CH family. In terms of assembly, homodimer. Mg(2+) is required as a cofactor. The cofactor is Zn(2+).

Its subcellular location is the cytoplasm. It carries out the reaction 1-(5-phospho-beta-D-ribosyl)-5'-AMP + H2O = 1-(5-phospho-beta-D-ribosyl)-5-[(5-phospho-beta-D-ribosylamino)methylideneamino]imidazole-4-carboxamide. It functions in the pathway amino-acid biosynthesis; L-histidine biosynthesis; L-histidine from 5-phospho-alpha-D-ribose 1-diphosphate: step 3/9. Its function is as follows. Catalyzes the hydrolysis of the adenine ring of phosphoribosyl-AMP. The chain is Phosphoribosyl-AMP cyclohydrolase from Chlorobium limicola (strain DSM 245 / NBRC 103803 / 6330).